Consider the following 201-residue polypeptide: Dynactin subunit 6 (201 aa).

Belongs to the dynactin subunits 5/6 family. Dynactin subunit 6 subfamily. In terms of assembly, member of the pointed-end complex of the dynactin shoulder complex which contains dctn4, dctn5 and dctn6 subunits and Actr10. Within the complex dctn6 forms a heterodimer with dctn5. Interacts with plk1.

The protein localises to the cytoplasm. The protein resides in the cytoskeleton. It is found in the chromosome. Its subcellular location is the centromere. It localises to the kinetochore. Part of the dynactin complex that activates the molecular motor dynein for ultra-processive transport along microtubules. The polypeptide is Dynactin subunit 6 (dctn6) (Xenopus tropicalis (Western clawed frog)).